The primary structure comprises 365 residues: AP2/ERF and B3 domain-containing protein Os01g0141000 (365 aa).

Residues 1-24 (MGVVSFSSTSSGASTATTESGGAV) are disordered. The AP2/ERF DNA-binding region spans 68-123 (RYKGVVPQPNGRWGAQIYERHARVWLGTFPDEEAAARAYDVAALRYRGRDAATNFP). The segment at residues 182-294 (FEKAVTPSDV…KLLFIDCKKN (113 aa)) is a DNA-binding region (TF-B3).

It is found in the nucleus. In Oryza sativa subsp. japonica (Rice), this protein is AP2/ERF and B3 domain-containing protein Os01g0141000.